Consider the following 519-residue polypeptide: Carboxyl-terminal-processing peptidase 3, chloroplastic (519 aa).

The 89-residue stretch at 186-274 folds into the PDZ domain; the sequence is YQSFRIGSDG…IKLKNVNGSG (89 aa). Residues Ser407 and Lys432 each act as charge relay system in the active site.

This sequence belongs to the peptidase S41A family.

It is found in the plastid. It localises to the chloroplast thylakoid lumen. It carries out the reaction The enzyme shows specific recognition of a C-terminal tripeptide, Xaa-Yaa-Zaa, in which Xaa is preferably Ala or Leu, Yaa is preferably Ala or Tyr, and Zaa is preferably Ala, but then cleaves at a variable distance from the C-terminus. A typical cleavage is -Ala-Ala-|-Arg-Ala-Ala-Lys-Glu-Asn-Tyr-Ala-Leu-Ala-Ala.. In terms of biological role, protease involved in the C-terminal processing of the chloroplastic D1 protein of photosystem II. This proteolytic processing is necessary to allow the light-driven assembly of the tetranuclear manganese cluster, which is responsible for photosynthetic water oxidation. This chain is Carboxyl-terminal-processing peptidase 3, chloroplastic (CTPA3), found in Arabidopsis thaliana (Mouse-ear cress).